A 43-amino-acid polypeptide reads, in one-letter code: Plasma membrane ATPase proteolipid 2 (43 aa).

Positions 1-5 are excised as a propeptide; the sequence is MLMST. The helical transmembrane segment at 9 to 29 threads the bilayer; it reads GVILVFILVGLACIAIISTII. Over 30 to 43 the chain is Cytoplasmic; the sequence is YRKWQARQRGLQRF.

Monomer and homodimer. Associated with the 100 kDa subunit of the plasma membrane H(+)-ATPase.

The protein localises to the cell membrane. This Saccharomyces cerevisiae (strain ATCC 204508 / S288c) (Baker's yeast) protein is Plasma membrane ATPase proteolipid 2 (PMP2).